The sequence spans 305 residues: MSNLPFTVAALYCFAPLPQYESLREPLAQLCCANGIKGTLLLAAEGINGTVAGSAGAIEKLIAHITAIPGLGEPELKYSHASEMPFHRMKVRLKREIVTMGVEGIDPLKSVGTYIAPKDWNALIADENTVVVDKRNDYEYAIGTFEGAIDPQTRTFREFPEWVKQNRDRLEGKKIAMFCTGGIRCEKATAFVKGLGFDDVYHLKGGILKYLEEVPREQSMWNGECFVFDERVAVGHGLAESDVELCRACRRPLTPQDKLSQFFEEGVSCAGCYAERTPEDRARYAERQKQVKLAEKRGANKHIGS.

The region spanning 125-219 is the Rhodanese domain; it reads ADENTVVVDK…YLEEVPREQS (95 aa). Cys179 (cysteine persulfide intermediate) is an active-site residue.

The protein belongs to the TrhO family.

It carries out the reaction uridine(34) in tRNA + AH2 + O2 = 5-hydroxyuridine(34) in tRNA + A + H2O. Catalyzes oxygen-dependent 5-hydroxyuridine (ho5U) modification at position 34 in tRNAs. This chain is tRNA uridine(34) hydroxylase, found in Brucella abortus (strain S19).